The following is a 688-amino-acid chain: T-box transcription factor TBX2-A (688 aa).

Positions 104–277 form a DNA-binding region, T-box; that stretch reads LWDQFHKIGT…NNPFAKGFRD (174 aa). Disordered stretches follow at residues 301-436 and 606-688; these read CKAD…GSLS and PSTN…ETPK. Composition is skewed to basic and acidic residues over residues 340–361, 378–403, and 412–430; these read NNRE…EIRS, RLED…KDGS, and SLEK…KSDP. Positions 621 to 636 are enriched in low complexity; that stretch reads PGSESSKPGSSRESSP. Positions 655-679 form a coiled coil; sequence ASMKDSINELQNIQRLVSGLESQRE. Residues 676–688 show a composition bias toward basic and acidic residues; that stretch reads SQREISPGRETPK.

Binds DNA as a monomer.

It is found in the nucleus. In terms of biological role, transcription factor which acts as a transcriptional repressor. May also function as a transcriptional activator. Binds to the palindromic T site 5'-TTCACACCTAGGTGTGAA-3' DNA sequence, or a half-site, which are present in the regulatory region of several genes. The sequence is that of T-box transcription factor TBX2-A (tbx2-a) from Xenopus laevis (African clawed frog).